The following is a 58-amino-acid chain: UPF0339 protein Msl4696 (58 aa).

Belongs to the UPF0339 family.

This chain is UPF0339 protein Msl4696, found in Mesorhizobium japonicum (strain LMG 29417 / CECT 9101 / MAFF 303099) (Mesorhizobium loti (strain MAFF 303099)).